Consider the following 290-residue polypeptide: Porphobilinogen deaminase (290 aa).

C237 bears the S-(dipyrrolylmethanemethyl)cysteine mark.

The protein belongs to the HMBS family. As to quaternary structure, monomer. Dipyrromethane is required as a cofactor.

It carries out the reaction 4 porphobilinogen + H2O = hydroxymethylbilane + 4 NH4(+). It functions in the pathway porphyrin-containing compound metabolism; protoporphyrin-IX biosynthesis; coproporphyrinogen-III from 5-aminolevulinate: step 2/4. In terms of biological role, tetrapolymerization of the monopyrrole PBG into the hydroxymethylbilane pre-uroporphyrinogen in several discrete steps. The chain is Porphobilinogen deaminase from Clostridium kluyveri (strain NBRC 12016).